A 336-amino-acid polypeptide reads, in one-letter code: Phosphate acyltransferase (336 aa).

This sequence belongs to the PlsX family. In terms of assembly, homodimer. Probably interacts with PlsY.

It is found in the cytoplasm. The enzyme catalyses a fatty acyl-[ACP] + phosphate = an acyl phosphate + holo-[ACP]. Its pathway is lipid metabolism; phospholipid metabolism. Its function is as follows. Catalyzes the reversible formation of acyl-phosphate (acyl-PO(4)) from acyl-[acyl-carrier-protein] (acyl-ACP). This enzyme utilizes acyl-ACP as fatty acyl donor, but not acyl-CoA. In Pseudomonas putida (strain ATCC 47054 / DSM 6125 / CFBP 8728 / NCIMB 11950 / KT2440), this protein is Phosphate acyltransferase.